We begin with the raw amino-acid sequence, 283 residues long: NFU1 iron-sulfur cluster scaffold homolog, mitochondrial (283 aa).

A mitochondrion-targeting transit peptide spans 1–65; that stretch reads MSKFLSQAAI…ELRMPVACRR (65 aa). Residues 182–250 are nifU; it reads IKELLDTRIR…IPEVESVEQV (69 aa). C219 and C222 together coordinate [4Fe-4S] cluster.

It belongs to the NifU family.

The protein localises to the mitochondrion. In terms of biological role, molecular scaffold for [Fe-S] cluster assembly of mitochondrial iron-sulfur proteins. In Drosophila sechellia (Fruit fly), this protein is NFU1 iron-sulfur cluster scaffold homolog, mitochondrial.